An 81-amino-acid polypeptide reads, in one-letter code: Lantipeptide prochlorosin 1.1 (81 aa).

A propeptide spanning residues 1 to 65 (MSEEQLKAFI…DDDLEGVAGG (65 aa)) is cleaved from the precursor. Residues 68–72 (CVQGT) constitute a cross-link (beta-methyllanthionine (Cys-Thr)). Positions 77–81 (TINVC) form a cross-link, beta-methyllanthionine (Thr-Cys).

Post-translationally, cross-links are proved in vitro, when coepressed in E.coli with the ProcM lanthionine synthetase. In terms of processing, the beta-methyllanthionine residues have a DL configuration (with 2S,3S,6R stereochemistry). Maturation of prochlorosin involves the enzymatic conversion of Thr, and Ser into dehydrated AA and the formation of thioether bonds with cysteines. This is followed by membrane translocation and cleavage of the modified precursor.

Its subcellular location is the secreted. Its function is as follows. Lanthionine-containing peptide (lantipeptide) with unknown function. Does not show antibiotic activity against Lactococcus lactis 117 and Bacillus subtilis 6633 bacteria. Organisms that produce this peptide live in oligotrophic environments at very dilute concentrations, suggesting this peptide is not secreted to influence other bacteria. This is Lantipeptide prochlorosin 1.1 from Prochlorococcus marinus (strain MIT 9313).